Consider the following 905-residue polypeptide: Toll-like receptor 3 (905 aa).

The first 25 residues, 1-25 (MKGCSSYLMYSFGGLLSLWILLVSS), serve as a signal peptide directing secretion. The region spanning 26–52 (TNQCTVRYNVADCSHLKLTHIPDDLPS) is the LRRNT domain. Residues 26-705 (TNQCTVRYNV…SCKDSAPFEL (680 aa)) are Lumenal-facing. A disulfide bridge connects residues C29 and C38. N53, N58, and N71 each carry an N-linked (GlcNAc...) asparagine glycan. 6 LRR repeats span residues 53-74 (NITVLNLTHNQLRRLPPTNFTR), 77-98 (QLAILDAGFNSISKLEPELCQI), 101-122 (LLKVLNLQHNELSQISDQTFVF), 125-146 (NLTELDLMSNSIHKIKSNPFKN), 149-170 (NLIKLDLSHNGLSSTKLGTGVQ), and 173-196 (NLQELLLAKNKILALRSEELEFLG). C96 and C123 form a disulfide bridge. An N-linked (GlcNAc...) asparagine glycan is attached at N125. N-linked (GlcNAc...) asparagine glycosylation occurs at N197. The stretch at 199 to 220 (SLRKLDLSSNPLKEFSPGCFQT) is one LRR 7 repeat. N-linked (GlcNAc...) asparagine glycans are attached at residues N248, N253, N276, and N292. 15 LRR repeats span residues 250 to 271 (SIQNLSLANNQLLATSESTFSG), 276 to 297 (NLTQLDLSYNNLHDVGNGSFSY), 300 to 321 (SLRYLSLEYNNIQRLSPRSFYG), 324 to 345 (NLRYLSLKRAFTKQSVSLASHP), 357 to 378 (YLEYLNMDDNNIPSTKSNTFTG), 381 to 401 (SLKYLSLSKTFTSLQTLTNET), 409 to 430 (PLLTLNLTKNHISKIANGTFSW), 433 to 454 (QLRILDLGLNEIEQKLSGQEWR), 458 to 479 (NIFEIYLSYNKYLQLSTSSFAL), 482 to 502 (SLQRLMLRRVALKNVDISPSP), 508 to 529 (NLTILDLSNNNIANINEDLLEG), 532 to 553 (NLEILDFQHNNLARLWKRANPG), 564 to 585 (HLHILNLESNGLDEIPVGVFKN), 588 to 609 (ELKSINLGLNNLNKLEPFIFDD), and 612 to 633 (SLRSLNLQKNLITSVEKDVFGP). N-linked (GlcNAc...) asparagine glycosylation is found at N399, N414, and N425. A glycan (N-linked (GlcNAc...) asparagine) is linked at N508. The region spanning 646–699 (NPFDCTCESISWFVNWINQTHTNISELSTHYLCNTPHHYYGFPLKLFDTSSCKD) is the LRRCT domain. Disulfide bonds link C650–C678 and C652–C697. N663 and N668 each carry an N-linked (GlcNAc...) asparagine glycan. The helical transmembrane segment at 706–726 (LFIISTSMLLVFILVVLLIHI) threads the bilayer. The Cytoplasmic segment spans residues 727 to 905 (EGWRISFYWN…VALGSRNSAH (179 aa)). In terms of domain architecture, TIR spans 755-898 (FEYTAYIIHA…AFHHKLQVAL (144 aa)). The residue at position 760 (Y760) is a Phosphotyrosine. Glycyl lysine isopeptide (Lys-Gly) (interchain with G-Cter in ubiquitin) cross-links involve residues K766, K813, and K832. Y859 is modified (phosphotyrosine).

The protein belongs to the Toll-like receptor family. As to quaternary structure, monomer and homodimer; dimerization is triggered by ligand-binding, the signaling unit is composed of one ds-RNA of around 40 bp and two TLR3 molecules, and lateral clustering of signaling units along the length of the ds-RNA ligand is required for TLR3 signal transduction. Interacts (via transmembrane domain) with UNC93B1; the interaction is required for transport from the ER to the endosomes. Interacts with SRC; upon binding of double-stranded RNA. Interacts with TICAM1 (via the TIR domain) in response to poly(I:C) and this interaction is enhanced in the presence of WDFY1. The tyrosine-phosphorylated form (via TIR domain) interacts with WDFY1 (via WD repeat 2) in response to poly(I:C). Ubiquitinated by RNF170 at Lys-766 via 'Lys-48'-linked ubiquitin chains; leading to TLR3 proteasomal degradation. TLR3 signaling requires a proteolytic cleavage mediated by cathepsins CTSB and CTSH, the cleavage occurs between amino acids 252 and 346. The cleaved form of TLR3 is the predominant form found in endosomes. Post-translationally, ubiquitinated by TRIM3; leading to recognition and sorting of polyubiquitinated TLR3 by the ESCRT complexes. Ubiquitinated by ZNRF1 via 'Lys-63'-linked ubiquitin chains; leading to TLR3 lysosomal trafficking and degradation. Highly expressed in lung. After intraperitoneal injection of lipopolysaccharide, highly expressed in brain, heart, kidney, liver, lung and spleen.

The protein localises to the endoplasmic reticulum membrane. It localises to the endosome membrane. Its subcellular location is the early endosome. In terms of biological role, key component of innate and adaptive immunity. TLRs (Toll-like receptors) control host immune response against pathogens through recognition of molecular patterns specific to microorganisms. TLR3 is a nucleotide-sensing TLR which is activated by double-stranded RNA, a sign of viral infection. Acts via the adapter TRIF/TICAM1, leading to NF-kappa-B activation, IRF3 nuclear translocation, cytokine secretion and the inflammatory response. The sequence is that of Toll-like receptor 3 from Mus musculus (Mouse).